The primary structure comprises 293 residues: 3-hydroxybutyrate-oligomer hydrolase (293 aa).

Belongs to the AB hydrolase superfamily.

The protein localises to the cytoplasm. The enzyme catalyses (3R)-hydroxybutanoate pentamer + H2O = (3R)-hydroxybutanoate tetramer + (R)-3-hydroxybutanoate + H(+). It carries out the reaction (3R)-hydroxybutanoate tetramer + H2O = (3R)-hydroxybutanoate trimer + (R)-3-hydroxybutanoate + H(+). The catalysed reaction is (3R)-hydroxybutanoate trimer + H2O = (3R)-hydroxybutanoate dimer + (R)-3-hydroxybutanoate + H(+). It catalyses the reaction (3R)-hydroxybutanoate dimer + H2O = 2 (R)-3-hydroxybutanoate + H(+). The enzyme catalyses [(3R)-hydroxybutanoate](n) + H2O = [(3R)-hydroxybutanoate](n-1) + (R)-3-hydroxybutanoate + H(+). Catalyzes the degradation of various 3-hydroxybutyrate (3HB) oligomers at a high specific activity and artificial amorphous poly(3-hydroxybutyrate) (PHB) at a lower specific activity. Hydrolyzes the 3HB pentamer most efficiently than the tetramer, trimer and dimer. Does not hydrolyze native PHB granules and semicrystalline PHB. Participates in the mobilization of PHB along with other hydrolases. This chain is 3-hydroxybutyrate-oligomer hydrolase, found in Cupriavidus necator (strain ATCC 17699 / DSM 428 / KCTC 22496 / NCIMB 10442 / H16 / Stanier 337) (Ralstonia eutropha).